Here is a 428-residue protein sequence, read N- to C-terminus: Glutamate-1-semialdehyde 2,1-aminomutase (428 aa).

An N6-(pyridoxal phosphate)lysine modification is found at Lys-265.

It belongs to the class-III pyridoxal-phosphate-dependent aminotransferase family. HemL subfamily. In terms of assembly, homodimer. The cofactor is pyridoxal 5'-phosphate.

It is found in the cytoplasm. The enzyme catalyses (S)-4-amino-5-oxopentanoate = 5-aminolevulinate. It functions in the pathway porphyrin-containing compound metabolism; protoporphyrin-IX biosynthesis; 5-aminolevulinate from L-glutamyl-tRNA(Glu): step 2/2. This Vesicomyosocius okutanii subsp. Calyptogena okutanii (strain HA) protein is Glutamate-1-semialdehyde 2,1-aminomutase.